The primary structure comprises 378 residues: POU domain, class 3, transcription factor 2 (378 aa).

Disordered stretches follow at residues 1–28 (MATT…SMQQ), 86–118 (SPRD…HDSR), and 151–205 (LIPG…TPTS). Positions 164–181 (MRDAHEDHHSPHLSDHGH) are enriched in basic and acidic residues. The POU-specific domain occupies 200 to 274 (EDTPTSDDLE…LLNKWLEEAD (75 aa)). Ser279 carries the post-translational modification Phosphoserine. A DNA-binding region (homeobox) is located at residues 292 to 351 (KRKKRTSIEVSVKGALESHFLKCPKPAASEITSLADSLQLEKEVVRVWFCNRRQKEKRMT). The segment at 347–378 (EKRMTPPGGPLPGTEDVYGDTPPHHGVQTPVQ) is disordered.

The protein belongs to the POU transcription factor family. Class-3 subfamily. Predominantly expressed in the central nervous system, with strong expression in the cerebellum.

It is found in the nucleus. Functionally, transcription factor that may play important roles in patterning the embryonic brain. This chain is POU domain, class 3, transcription factor 2 (pou3f2), found in Danio rerio (Zebrafish).